The following is a 152-amino-acid chain: Endoribonuclease YbeY (152 aa).

Zn(2+) contacts are provided by histidine 112, histidine 116, and histidine 122.

It belongs to the endoribonuclease YbeY family. The cofactor is Zn(2+).

Its subcellular location is the cytoplasm. Functionally, single strand-specific metallo-endoribonuclease involved in late-stage 70S ribosome quality control and in maturation of the 3' terminus of the 16S rRNA. The protein is Endoribonuclease YbeY of Pseudoalteromonas translucida (strain TAC 125).